The primary structure comprises 181 residues: Heavy metal-associated isoprenylated plant protein 46 (181 aa).

The HMA domain maps to 2–71; that stretch reads KQKILIRVTM…KVAFAELVSV (70 aa). Positions 74–121 are disordered; it reads VEPPKKEDEKKGGDGKGAEGKGGDQKGGDKKGPDDKEPPEPKPVPCYP. Over residues 75-113 the composition is skewed to basic and acidic residues; the sequence is EPPKKEDEKKGGDGKGAEGKGGDQKGGDKKGPDDKEPPE. Cys178 is modified (cysteine methyl ester). Cys178 is lipidated: S-farnesyl cysteine. Residues 179 to 181 constitute a propeptide, removed in mature form; that stretch reads KIM.

Belongs to the HIPP family.

In terms of biological role, probable heavy-metal-binding protein. This chain is Heavy metal-associated isoprenylated plant protein 46, found in Arabidopsis thaliana (Mouse-ear cress).